Consider the following 359-residue polypeptide: CDP-glucose 4,6-dehydratase (359 aa).

This sequence belongs to the NAD(P)-dependent epimerase/dehydratase family. NAD(+) serves as cofactor.

The enzyme catalyses CDP-D-glucose = CDP-4-dehydro-6-deoxy-D-glucose + H2O. The protein operates within nucleotide-sugar biosynthesis; CDP-3,6-dideoxy-D-mannose biosynthesis; CDP-3,6-dideoxy-D-mannose from CTP and alpha-D-glucose 1-phosphate: step 2/5. It participates in bacterial outer membrane biogenesis; LPS O-antigen biosynthesis. In Salmonella typhimurium (strain LT2 / SGSC1412 / ATCC 700720), this protein is CDP-glucose 4,6-dehydratase (rfbG).